A 105-amino-acid polypeptide reads, in one-letter code: BLOC-1-related complex subunit 7 (105 aa).

This sequence belongs to the BORCS7 family. In terms of assembly, component of the BLOC-one-related complex (BORC) which is composed of BLOC1S1, BLOC1S2, BORCS5, BORCS6, BORCS7, BORCS8, KXD1 and SNAPIN.

The protein resides in the lysosome membrane. Functionally, as part of the BORC complex may play a role in lysosomes movement and localization at the cell periphery. Associated with the cytosolic face of lysosomes, the BORC complex may recruit ARL8B and couple lysosomes to microtubule plus-end-directed kinesin motor. The sequence is that of BLOC-1-related complex subunit 7 from Bos taurus (Bovine).